The primary structure comprises 464 residues: Glycosyl hydrolase family 109 protein 1 (464 aa).

An N-terminal signal peptide occupies residues 1-16 (MFKHLNALFIGLALFA). Cys-17 is lipidated: N-palmitoyl cysteine. Residue Cys-17 is the site of S-diacylglycerol cysteine attachment. Residues 63–64 (MR), Asp-85, 134–137 (WKHH), 154–155 (EV), and Asn-183 contribute to the NAD(+) site. Residues Tyr-212, Arg-228, 240 to 243 (YATH), and Tyr-318 each bind substrate. Tyr-240 is an NAD(+) binding site.

The protein belongs to the Gfo/Idh/MocA family. Glycosyl hydrolase 109 subfamily. NAD(+) serves as cofactor.

It localises to the cell membrane. Its function is as follows. Glycosidase. Has no alpha-N-acetylgalactosaminidase activity. The chain is Glycosyl hydrolase family 109 protein 1 from Bacteroides fragilis (strain ATCC 25285 / DSM 2151 / CCUG 4856 / JCM 11019 / LMG 10263 / NCTC 9343 / Onslow / VPI 2553 / EN-2).